The primary structure comprises 281 residues: Arabinooligosaccharides transport system permease protein AraQ (281 aa).

Helical transmembrane passes span 15–35, 81–101, 112–132, 142–162, 185–205, and 247–267; these read LTLF…CLLL, LVLG…IGYG, IIFV…MLPL, IDSY…VFFF, FGIF…AMII, and MLIS…LFFQ. In terms of domain architecture, ABC transmembrane type-1 spans 77–266; sequence FFNSLVLGLF…LPVIIIFLFF (190 aa).

Belongs to the binding-protein-dependent transport system permease family. MalFG subfamily. The complex is composed of two ATP-binding proteins (MsmX), two transmembrane proteins (AraP and AraQ) and a solute-binding protein (AraN).

The protein localises to the cell membrane. In terms of biological role, part of the ABC transporter complex AraNPQ involved in the uptake of arabinooligosaccharides. Transports alpha-1,5-arabinooligosaccharides, at least up to four L-arabinosyl units. Responsible for the translocation of the substrate across the membrane. The chain is Arabinooligosaccharides transport system permease protein AraQ from Bacillus subtilis (strain 168).